A 207-amino-acid chain; its full sequence is dITP/XTP pyrophosphatase (207 aa).

7-12 (SNNAKK) provides a ligand contact to substrate. The active-site Proton acceptor is Asp-72. Asp-72 contacts Mg(2+). Substrate-binding positions include Ser-73, 155–158 (FGYD), Lys-184, and 189–190 (HR).

This sequence belongs to the HAM1 NTPase family. In terms of assembly, homodimer. Requires Mg(2+) as cofactor.

The enzyme catalyses XTP + H2O = XMP + diphosphate + H(+). It catalyses the reaction dITP + H2O = dIMP + diphosphate + H(+). It carries out the reaction ITP + H2O = IMP + diphosphate + H(+). Its function is as follows. Pyrophosphatase that catalyzes the hydrolysis of nucleoside triphosphates to their monophosphate derivatives, with a high preference for the non-canonical purine nucleotides XTP (xanthosine triphosphate), dITP (deoxyinosine triphosphate) and ITP. Seems to function as a house-cleaning enzyme that removes non-canonical purine nucleotides from the nucleotide pool, thus preventing their incorporation into DNA/RNA and avoiding chromosomal lesions. The polypeptide is dITP/XTP pyrophosphatase (Corynebacterium efficiens (strain DSM 44549 / YS-314 / AJ 12310 / JCM 11189 / NBRC 100395)).